A 467-amino-acid polypeptide reads, in one-letter code: Gustatory and odorant receptor 22 (467 aa).

The Cytoplasmic segment spans residues 1–106 (MIHTQMEDAQ…MPRTTFTWCS (106 aa)). The helical transmembrane segment at 107–127 (KAFLWAYFIYACETVIVLVVA) threads the bilayer. Topologically, residues 128–144 (RERINKFISTSDKRFDE) are extracellular. A helical membrane pass occupies residues 145–165 (VIYNIIFMSIMVPHFLLPVAS). The Cytoplasmic segment spans residues 166 to 198 (WRNGSEVAKFKNMWTDFQYKYLIVTGKPIVFPK). The chain crosses the membrane as a helical span at residues 199–219 (LYPITWTLCIVSWSLSLVIIL). At 220-238 (SQYYLQPDFQFCHTFAYYH) the chain is on the extracellular side. Residues 239-259 (IIAMLNGFCSLWFVNCTAFGT) form a helical membrane-spanning segment. The Cytoplasmic segment spans residues 260–304 (ASKAFAKELTDVLATERPAAKLTEYRHLWVDLSHMMQQLGKAYSN). A helical membrane pass occupies residues 305 to 325 (MYGIYCLVIFFTTIIATYGSL). Residues 326–337 (SEIIEHGATYKE) lie on the Extracellular side of the membrane. Residues 338 to 358 (VGLFVIVFYCMSLLFIICNEA) form a helical membrane-spanning segment. Over 359 to 414 (HHASKRVGLNFQERLLNVNLTAVDKATQKEVEMFLVAIDKNPPTMNLDGYANINRG) the chain is Cytoplasmic. The chain crosses the membrane as a helical span at residues 415–435 (LITSNISFMATYLVVLMQFKL). The Extracellular portion of the chain corresponds to 436-467 (TLLRQSAKNAFISALKANLSRIRSLDADKVNT). N-linked (GlcNAc...) asparagine glycosylation occurs at Asn-453.

Belongs to the insect chemoreceptor superfamily. Gustatory receptor (GR) family. Gr21a subfamily. As to expression, carbon dioxide-responsive neurons coexpress GPRgr22 and GPRgr24 in the maxillary palp at both larval and adult life stages.

It is found in the cell membrane. In terms of biological role, gustatory receptor which mediates acceptance or avoidance behavior, depending on its substrates. GPRgr22 and GPRgr24 together are sufficient for olfactory carbon dioxide-chemosensation. The protein is Gustatory and odorant receptor 22 of Anopheles gambiae (African malaria mosquito).